The following is a 1025-amino-acid chain: MKFFALFIYRPVATILLSVAITLCGILGFRMLPVAPLPQVDFPVIMVSASLPGASPETMASSVATPLERSLGRIAGVSEMTSSSSLGSTRIILQFDFDRDINGAARDVQAAINAAQSLLPSGMPSRPTYRKANPSDAPIMILTLTSDTYSQGELYDFASTQLAPTISQIDGVGDVDVGGSSLPAVRVGLNPQALFNQGVSLDDVRTAISNANVRKPQGALEDGTHRWQIQTNDELKTAAEYQPLIIHYNNGGAVRLGDVATVTDSVQDVRNAGMTNAKPAILLMIRKLPEANIIQTVDSIRARLPELQSTIPAAIDLQIAQDRSPTIRASLEEVEQTLIISVALVILVVFLFLRSGRATIIPAVAVPVSLIGTFAAMYLCGFSLNNLSLMALTIATGFVVDDAIVVLENIARHLEAGMKPLQAALQGTREVGFTVLSMSLSLVAVFLPLLLMGGLPGRLLREFAVTLSVAIGISLLVSLTLTPMMCGWMLKASKPREQKRLRGFGRMLVALQQGYGKSLKWVLNHTRLVGVVLLGTIALNIWLYISIPKTFFPEQDTGVLMGGIQADQSISFQAMRGKLQDFMKIIRDDPAVDNVTGFTGGSRVNSGMMFITLKPRGERSETAQQIIDRLRKKLAKEPGANLFLMAVQDIRVGGRQANASYQYTLLSDDLAALREWEPKIRKKLATLPELADVNSDQEDNGAEMNLIYDRDTMARLGIDVQAANSLLNNAFGQRQISTIYQPMNQYKVVMEVDPRYTQDISALEKMFVINNEGKAIPLSYFAKWQPANAPLSVNHQGLSAASTISFNLPTGKSLSDASAAIDRAMTQLGVPSTVRGSFAGTAQVFQETMNSQVILIIAAIATVYIVLGILYESYVHPLTILSTLPSAGVGALLALELFNAPFSLIALIGIMLLIGIVKKNAIMMVDFALEAQRHGNLTPQEAIFQACLLRFRPIMMTTLAALFGALPLVLSGGDGSELRQPLGITIVGGLVMSQLLTLYTTPVVYLFFDRLRLRFSRKPKQAVTE.

Transmembrane regions (helical) follow at residues 3 to 23 (FFAL…AITL), 333 to 353 (EVEQ…FLFL), 360 to 380 (IIPA…MYLC), 387 to 407 (LSLM…IVVL), 431 to 451 (VGFT…PLLL), 463 to 483 (FAVT…TLTP), 528 to 548 (LVGV…ISIP), 853 to 873 (VILI…LYES), 875 to 895 (VHPL…LLAL), 897 to 917 (LFNA…IGIV), 953 to 973 (PIMM…LSGG), and 984 to 1004 (ITIV…TPVV).

It belongs to the resistance-nodulation-cell division (RND) (TC 2.A.6) family. MdtC subfamily. Part of a tripartite efflux system composed of MdtA, MdtB and MdtC. MdtC forms a heteromultimer with MdtB.

The protein localises to the cell inner membrane. The MdtABC tripartite complex confers resistance against novobiocin and deoxycholate. The chain is Multidrug resistance protein MdtC from Escherichia coli O127:H6 (strain E2348/69 / EPEC).